Consider the following 226-residue polypeptide: 2,3-bisphosphoglycerate-dependent phosphoglycerate mutase (226 aa).

Substrate-binding positions include 8-15 (RHGQSVWN), 21-22 (TG), Arg58, 109-112 (ERMY), Lys120, 136-137 (RR), and 180-181 (GN). Catalysis depends on His9, which acts as the Tele-phosphohistidine intermediate. The active-site Proton donor/acceptor is Glu109.

It belongs to the phosphoglycerate mutase family. BPG-dependent PGAM subfamily.

The catalysed reaction is (2R)-2-phosphoglycerate = (2R)-3-phosphoglycerate. It functions in the pathway carbohydrate degradation; glycolysis; pyruvate from D-glyceraldehyde 3-phosphate: step 3/5. Functionally, catalyzes the interconversion of 2-phosphoglycerate and 3-phosphoglycerate. This chain is 2,3-bisphosphoglycerate-dependent phosphoglycerate mutase, found in Chlamydia trachomatis serovar L2b (strain UCH-1/proctitis).